The chain runs to 335 residues: Phosphate acyltransferase (335 aa).

It belongs to the PlsX family. As to quaternary structure, homodimer. Probably interacts with PlsY.

The protein resides in the cytoplasm. It catalyses the reaction a fatty acyl-[ACP] + phosphate = an acyl phosphate + holo-[ACP]. Its pathway is lipid metabolism; phospholipid metabolism. In terms of biological role, catalyzes the reversible formation of acyl-phosphate (acyl-PO(4)) from acyl-[acyl-carrier-protein] (acyl-ACP). This enzyme utilizes acyl-ACP as fatty acyl donor, but not acyl-CoA. The chain is Phosphate acyltransferase from Streptococcus suis (strain 98HAH33).